Consider the following 240-residue polypeptide: MAYKRVLLKLSGEALMGDASYGIDPAVVQRIAQEIATVVQDGFQVAIVVGGGNIFRGIKGAAAGMERATADYVGMIATVMNAITLQDALEQLQVPTRVQTAIAMQEVAEPYIRRRAIRHLEKGRVVIFGSGTGNPFFTTDTTAALRAAEINADVVFKATKVDGVYDSDPKLNPQARRFTTLNYNYVLNHELGVMDSTAIALCKDNSIPIVVFDLFGEGNIRRAVQGEDIGTTVGGSCEVS.

9 to 12 provides a ligand contact to ATP; the sequence is KLSG. Gly51 serves as a coordination point for UMP. Residues Gly52 and Arg56 each contribute to the ATP site. UMP contacts are provided by residues Asp71 and 132–139; that span reads TGNPFFTT. Residues Thr159, Tyr165, and Asp168 each coordinate ATP.

It belongs to the UMP kinase family. As to quaternary structure, homohexamer.

It localises to the cytoplasm. The catalysed reaction is UMP + ATP = UDP + ADP. The protein operates within pyrimidine metabolism; CTP biosynthesis via de novo pathway; UDP from UMP (UMPK route): step 1/1. With respect to regulation, inhibited by UTP. In terms of biological role, catalyzes the reversible phosphorylation of UMP to UDP. The chain is Uridylate kinase from Synechococcus elongatus (strain ATCC 33912 / PCC 7942 / FACHB-805) (Anacystis nidulans R2).